Here is a 466-residue protein sequence, read N- to C-terminus: UDP-N-acetylmuramoylalanine--D-glutamate ligase (466 aa).

124–130 (GSDGKTT) lines the ATP pocket.

This sequence belongs to the MurCDEF family.

Its subcellular location is the cytoplasm. It catalyses the reaction UDP-N-acetyl-alpha-D-muramoyl-L-alanine + D-glutamate + ATP = UDP-N-acetyl-alpha-D-muramoyl-L-alanyl-D-glutamate + ADP + phosphate + H(+). It participates in cell wall biogenesis; peptidoglycan biosynthesis. Cell wall formation. Catalyzes the addition of glutamate to the nucleotide precursor UDP-N-acetylmuramoyl-L-alanine (UMA). The protein is UDP-N-acetylmuramoylalanine--D-glutamate ligase of Acetivibrio thermocellus (strain ATCC 27405 / DSM 1237 / JCM 9322 / NBRC 103400 / NCIMB 10682 / NRRL B-4536 / VPI 7372) (Clostridium thermocellum).